A 398-amino-acid polypeptide reads, in one-letter code: Phosphoglycerate kinase (398 aa).

Substrate is bound by residues 21–23, Arg-36, 59–62, Arg-119, and Arg-157; these read DFN and HLGR. ATP contacts are provided by residues Lys-208, Gly-296, Glu-327, and 354–357; that span reads GGDS.

The protein belongs to the phosphoglycerate kinase family. In terms of assembly, monomer.

The protein resides in the cytoplasm. It catalyses the reaction (2R)-3-phosphoglycerate + ATP = (2R)-3-phospho-glyceroyl phosphate + ADP. It participates in carbohydrate degradation; glycolysis; pyruvate from D-glyceraldehyde 3-phosphate: step 2/5. This Lactococcus lactis subsp. cremoris (strain SK11) protein is Phosphoglycerate kinase.